The chain runs to 456 residues: Cysteine--tRNA ligase (456 aa).

Residue Cys-30 participates in Zn(2+) binding. Residues 32 to 42 (MTVYDFCHIGH) carry the 'HIGH' region motif. Cys-211, His-236, and Glu-240 together coordinate Zn(2+). Residues 268-272 (KMSKS) carry the 'KMSKS' region motif. Lys-271 serves as a coordination point for ATP.

Belongs to the class-I aminoacyl-tRNA synthetase family. As to quaternary structure, monomer. Zn(2+) serves as cofactor.

Its subcellular location is the cytoplasm. The enzyme catalyses tRNA(Cys) + L-cysteine + ATP = L-cysteinyl-tRNA(Cys) + AMP + diphosphate. This chain is Cysteine--tRNA ligase, found in Dichelobacter nodosus (strain VCS1703A).